Consider the following 133-residue polypeptide: Small ribosomal subunit protein uS11 (133 aa).

It belongs to the universal ribosomal protein uS11 family. Part of the 30S ribosomal subunit. Interacts with proteins S7 and S18. Binds to IF-3.

Functionally, located on the platform of the 30S subunit, it bridges several disparate RNA helices of the 16S rRNA. Forms part of the Shine-Dalgarno cleft in the 70S ribosome. The protein is Small ribosomal subunit protein uS11 of Cupriavidus metallidurans (strain ATCC 43123 / DSM 2839 / NBRC 102507 / CH34) (Ralstonia metallidurans).